Consider the following 208-residue polypeptide: Protein GrpE (208 aa).

Basic and acidic residues predominate over residues 1 to 25 (MVDNKDFNEELKENIQEELDNETKA). The tract at residues 1–38 (MVDNKDFNEELKENIQEELDNETKAENPNIDEEVEEVS) is disordered. Residues 29–38 (NIDEEVEEVS) show a composition bias toward acidic residues.

Belongs to the GrpE family. Homodimer.

It is found in the cytoplasm. Functionally, participates actively in the response to hyperosmotic and heat shock by preventing the aggregation of stress-denatured proteins, in association with DnaK and GrpE. It is the nucleotide exchange factor for DnaK and may function as a thermosensor. Unfolded proteins bind initially to DnaJ; upon interaction with the DnaJ-bound protein, DnaK hydrolyzes its bound ATP, resulting in the formation of a stable complex. GrpE releases ADP from DnaK; ATP binding to DnaK triggers the release of the substrate protein, thus completing the reaction cycle. Several rounds of ATP-dependent interactions between DnaJ, DnaK and GrpE are required for fully efficient folding. This Clostridium perfringens (strain 13 / Type A) protein is Protein GrpE.